The following is a 463-amino-acid chain: Argininosuccinate lyase (463 aa).

The protein belongs to the lyase 1 family. Argininosuccinate lyase subfamily.

The protein localises to the cytoplasm. The catalysed reaction is 2-(N(omega)-L-arginino)succinate = fumarate + L-arginine. It participates in amino-acid biosynthesis; L-arginine biosynthesis; L-arginine from L-ornithine and carbamoyl phosphate: step 3/3. The chain is Argininosuccinate lyase from Dinoroseobacter shibae (strain DSM 16493 / NCIMB 14021 / DFL 12).